The sequence spans 333 residues: Probable siderophore transport system permease protein YfiZ (333 aa).

Positions Met1–Gly31 are cleaved as a signal peptide. 8 helical membrane passes run Ala64 to Leu84, Ile94 to Ile114, Ala119 to Gly139, Thr152 to Val172, Leu193 to Leu213, Val246 to Ile266, Trp280 to Ala300, and Ile303 to Phe323.

This sequence belongs to the binding-protein-dependent transport system permease family. FecCD subfamily. As to quaternary structure, the complex is composed of one ATP-binding protein (YusV), two transmembrane proteins (YfiZ and YfhA) and a solute-binding protein (YfiY).

It is found in the cell membrane. Part of the ABC transporter complex YfiYZ/YfhA/YusV involved in import of the iron-hydroxamate siderophores schizokinen, arthrobactin and corprogen. This Bacillus subtilis (strain 168) protein is Probable siderophore transport system permease protein YfiZ (yfiZ).